The chain runs to 142 residues: Translation initiation factor 2 subunit beta (142 aa).

Belongs to the eIF-2-beta/eIF-5 family. In terms of assembly, heterotrimer composed of an alpha, a beta and a gamma chain.

Its function is as follows. eIF-2 functions in the early steps of protein synthesis by forming a ternary complex with GTP and initiator tRNA. This Methanosphaera stadtmanae (strain ATCC 43021 / DSM 3091 / JCM 11832 / MCB-3) protein is Translation initiation factor 2 subunit beta.